The chain runs to 344 residues: Sulfate/thiosulfate import ATP-binding protein CysA (344 aa).

The ABC transporter domain occupies 3–233 (ILIDNVSKNF…PESAFVMSFL (231 aa)). 35 to 42 (GPSGCGKS) provides a ligand contact to ATP.

This sequence belongs to the ABC transporter superfamily. Sulfate/tungstate importer (TC 3.A.1.6) family. In terms of assembly, the complex is composed of two ATP-binding proteins (CysA), two transmembrane proteins (CysT and CysW) and a solute-binding protein (CysP).

The protein resides in the cell inner membrane. It catalyses the reaction sulfate(out) + ATP + H2O = sulfate(in) + ADP + phosphate + H(+). The catalysed reaction is thiosulfate(out) + ATP + H2O = thiosulfate(in) + ADP + phosphate + H(+). Functionally, part of the ABC transporter complex CysAWTP involved in sulfate/thiosulfate import. Responsible for energy coupling to the transport system. The chain is Sulfate/thiosulfate import ATP-binding protein CysA from Gloeobacter violaceus (strain ATCC 29082 / PCC 7421).